Here is a 194-residue protein sequence, read N- to C-terminus: NADH-quinone oxidoreductase subunit B (194 aa).

Residues M1–V11 are compositionally biased toward pro residues. A disordered region spans residues M1 to I24. The span at Q12–S21 shows a compositional bias: low complexity. Residues C72, C73, C137, and C167 each contribute to the [4Fe-4S] cluster site.

This sequence belongs to the complex I 20 kDa subunit family. As to quaternary structure, NDH-1 is composed of 14 different subunits. Subunits NuoB, C, D, E, F, and G constitute the peripheral sector of the complex. The cofactor is [4Fe-4S] cluster.

It localises to the cell inner membrane. The enzyme catalyses a quinone + NADH + 5 H(+)(in) = a quinol + NAD(+) + 4 H(+)(out). Its function is as follows. NDH-1 shuttles electrons from NADH, via FMN and iron-sulfur (Fe-S) centers, to quinones in the respiratory chain. The immediate electron acceptor for the enzyme in this species is believed to be ubiquinone. Couples the redox reaction to proton translocation (for every two electrons transferred, four hydrogen ions are translocated across the cytoplasmic membrane), and thus conserves the redox energy in a proton gradient. This Rhodospirillum centenum (strain ATCC 51521 / SW) protein is NADH-quinone oxidoreductase subunit B.